A 569-amino-acid polypeptide reads, in one-letter code: Proline--tRNA ligase (569 aa).

Belongs to the class-II aminoacyl-tRNA synthetase family. ProS type 1 subfamily. Homodimer.

The protein localises to the cytoplasm. It carries out the reaction tRNA(Pro) + L-proline + ATP = L-prolyl-tRNA(Pro) + AMP + diphosphate. Its function is as follows. Catalyzes the attachment of proline to tRNA(Pro) in a two-step reaction: proline is first activated by ATP to form Pro-AMP and then transferred to the acceptor end of tRNA(Pro). As ProRS can inadvertently accommodate and process non-cognate amino acids such as alanine and cysteine, to avoid such errors it has two additional distinct editing activities against alanine. One activity is designated as 'pretransfer' editing and involves the tRNA(Pro)-independent hydrolysis of activated Ala-AMP. The other activity is designated 'posttransfer' editing and involves deacylation of mischarged Ala-tRNA(Pro). The misacylated Cys-tRNA(Pro) is not edited by ProRS. The sequence is that of Proline--tRNA ligase from Desulforamulus reducens (strain ATCC BAA-1160 / DSM 100696 / MI-1) (Desulfotomaculum reducens).